Consider the following 308-residue polypeptide: Elongation factor Ts (308 aa).

The segment at 80 to 83 is involved in Mg(2+) ion dislocation from EF-Tu; the sequence is TDFV.

This sequence belongs to the EF-Ts family.

The protein localises to the cytoplasm. Functionally, associates with the EF-Tu.GDP complex and induces the exchange of GDP to GTP. It remains bound to the aminoacyl-tRNA.EF-Tu.GTP complex up to the GTP hydrolysis stage on the ribosome. The polypeptide is Elongation factor Ts (Sphingopyxis alaskensis (strain DSM 13593 / LMG 18877 / RB2256) (Sphingomonas alaskensis)).